A 272-amino-acid polypeptide reads, in one-letter code: Phosphoglycolate phosphatase (272 aa).

The Nucleophile role is filled by aspartate 19. Residues aspartate 19, aspartate 21, and aspartate 182 each coordinate Mg(2+).

Belongs to the HAD-like hydrolase superfamily. CbbY/CbbZ/Gph/YieH family. Requires Mg(2+) as cofactor.

It catalyses the reaction 2-phosphoglycolate + H2O = glycolate + phosphate. It participates in organic acid metabolism; glycolate biosynthesis; glycolate from 2-phosphoglycolate: step 1/1. Its function is as follows. Specifically catalyzes the dephosphorylation of 2-phosphoglycolate. Is involved in the dissimilation of the intracellular 2-phosphoglycolate formed during the DNA repair of 3'-phosphoglycolate ends, a major class of DNA lesions induced by oxidative stress. This Pseudomonas syringae pv. tomato (strain ATCC BAA-871 / DC3000) protein is Phosphoglycolate phosphatase.